Here is a 345-residue protein sequence, read N- to C-terminus: Tryptophan--tRNA ligase (345 aa).

ATP is bound by residues 12–14 (RPT) and 20–21 (GH). The short motif at 13 to 21 (PTGKLHLGH) is the 'HIGH' region element. Aspartate 144 lines the L-tryptophan pocket. ATP-binding positions include 156–158 (GKD), leucine 194, and 202–206 (KMSKS). Residues 202 to 206 (KMSKS) carry the 'KMSKS' region motif.

Belongs to the class-I aminoacyl-tRNA synthetase family. In terms of assembly, homodimer.

The protein localises to the cytoplasm. It carries out the reaction tRNA(Trp) + L-tryptophan + ATP = L-tryptophyl-tRNA(Trp) + AMP + diphosphate + H(+). In terms of biological role, catalyzes the attachment of tryptophan to tRNA(Trp). This Chlamydia caviae (strain ATCC VR-813 / DSM 19441 / 03DC25 / GPIC) (Chlamydophila caviae) protein is Tryptophan--tRNA ligase.